The sequence spans 140 residues: Nucleoside diphosphate kinase (140 aa).

Residues K11, F59, R87, T93, R104, and N114 each coordinate ATP. The Pros-phosphohistidine intermediate role is filled by H117.

The protein belongs to the NDK family. As to quaternary structure, homotetramer. Mg(2+) serves as cofactor.

It is found in the cytoplasm. The catalysed reaction is a 2'-deoxyribonucleoside 5'-diphosphate + ATP = a 2'-deoxyribonucleoside 5'-triphosphate + ADP. The enzyme catalyses a ribonucleoside 5'-diphosphate + ATP = a ribonucleoside 5'-triphosphate + ADP. Functionally, major role in the synthesis of nucleoside triphosphates other than ATP. The ATP gamma phosphate is transferred to the NDP beta phosphate via a ping-pong mechanism, using a phosphorylated active-site intermediate. This chain is Nucleoside diphosphate kinase, found in Gluconobacter oxydans (strain 621H) (Gluconobacter suboxydans).